The following is a 191-amino-acid chain: MVDTNNVKLRIENIVASVDLFAQLDLEKVLDICPNSKYNPEEFPGIICRFDDPKVALLIFSSGKLVVTGAKSIHDIERAVAKLIEKLKGIGVKFKRAPLIDIQNMVFSGDIGREFNLDNVALTLPNCEYEPEQFPGVIYRVKDPRAVILLFSSGKIVCSGAKSEADAWEAVRKLLRELEKYGLIEEEEEEL.

Tandem repeats lie at residues 11–87 (IENI…IEKL) and 102–178 (IQNM…LREL).

Belongs to the TBP family.

In terms of biological role, general factor that plays a role in the activation of archaeal genes transcribed by RNA polymerase. Binds specifically to the TATA box promoter element which lies close to the position of transcription initiation. The polypeptide is TATA-box-binding protein (tbp) (Pyrococcus abyssi (strain GE5 / Orsay)).